We begin with the raw amino-acid sequence, 627 residues long: (-)-alpha-pinene synthase 2, chloroplastic (627 aa).

Residues 1–36 (MALVSVAPMASRSCLHKSLSSSAHELKTICRTIPTL) constitute a chloroplast transit peptide. Positions 378, 382, and 530 each coordinate Mg(2+). Positions 378–382 (DDMYD) match the DDXXD motif motif.

Belongs to the terpene synthase family. Tpsd subfamily. Mg(2+) is required as a cofactor. The cofactor is Mn(2+).

The protein localises to the plastid. It is found in the chloroplast. It carries out the reaction (2E)-geranyl diphosphate = (1S,5S)-alpha-pinene + diphosphate. It catalyses the reaction (2E)-geranyl diphosphate = (1S,5S)-beta-pinene + diphosphate. It participates in terpene metabolism; oleoresin biosynthesis. In terms of biological role, involved in defensive oleoresin formation in conifers in response to insect attack or other injury. Involved in monoterpene (C10) olefins biosynthesis. A mixture of alpha- and beta-pinene (35:10) is produced by this enzyme. This is (-)-alpha-pinene synthase 2, chloroplastic from Picea sitchensis (Sitka spruce).